Consider the following 210-residue polypeptide: Chorismate pyruvate-lyase (210 aa).

Belongs to the chorismate pyruvate-lyase type 2 family.

It catalyses the reaction chorismate = 4-hydroxybenzoate + pyruvate. Its function is as follows. Removes the pyruvyl group from chorismate to provide 4-hydroxybenzoate (4HB). Involved in the synthesis of glycosylated p-hydroxybenzoic acid methyl esters (p-HBADs) and phenolic glycolipids (PGL) that play important roles in the pathogenesis of mycobacterial infections. The protein is Chorismate pyruvate-lyase of Mycobacterium leprae (strain TN).